Consider the following 163-residue polypeptide: ATP synthase subunit b', chloroplastic (163 aa).

A helical transmembrane segment spans residues 26 to 46 (ATLPLMAVQILLFMVILNAVF).

Belongs to the ATPase B chain family. F-type ATPases have 2 components, F(1) - the catalytic core - and F(0) - the membrane proton channel. F(1) has five subunits: alpha(3), beta(3), gamma(1), delta(1), epsilon(1). F(0) has four main subunits: a(1), b(1), b'(1) and c(10-14). The alpha and beta chains form an alternating ring which encloses part of the gamma chain. F(1) is attached to F(0) by a central stalk formed by the gamma and epsilon chains, while a peripheral stalk is formed by the delta, b and b' chains.

The protein resides in the plastid. It localises to the chloroplast thylakoid membrane. F(1)F(0) ATP synthase produces ATP from ADP in the presence of a proton or sodium gradient. F-type ATPases consist of two structural domains, F(1) containing the extramembraneous catalytic core and F(0) containing the membrane proton channel, linked together by a central stalk and a peripheral stalk. During catalysis, ATP synthesis in the catalytic domain of F(1) is coupled via a rotary mechanism of the central stalk subunits to proton translocation. Its function is as follows. Component of the F(0) channel, it forms part of the peripheral stalk, linking F(1) to F(0). The b'-subunit is a diverged and duplicated form of b found in plants and photosynthetic bacteria. The protein is ATP synthase subunit b', chloroplastic of Guillardia theta (Cryptophyte).